Here is a 596-residue protein sequence, read N- to C-terminus: Chaperone protein DnaK (596 aa).

Thr-180 is subject to Phosphothreonine; by autocatalysis.

Belongs to the heat shock protein 70 family.

Acts as a chaperone. The sequence is that of Chaperone protein DnaK from Thermotoga neapolitana (strain ATCC 49049 / DSM 4359 / NBRC 107923 / NS-E).